A 324-amino-acid polypeptide reads, in one-letter code: Glyoxylate/hydroxypyruvate reductase B (324 aa).

Active-site residues include R237 and E266. Catalysis depends on H285, which acts as the Proton donor.

It belongs to the D-isomer specific 2-hydroxyacid dehydrogenase family. GhrB subfamily. As to quaternary structure, homodimer.

It localises to the cytoplasm. It carries out the reaction glycolate + NADP(+) = glyoxylate + NADPH + H(+). The enzyme catalyses (R)-glycerate + NAD(+) = 3-hydroxypyruvate + NADH + H(+). The catalysed reaction is (R)-glycerate + NADP(+) = 3-hydroxypyruvate + NADPH + H(+). In terms of biological role, catalyzes the NADPH-dependent reduction of glyoxylate and hydroxypyruvate into glycolate and glycerate, respectively. The chain is Glyoxylate/hydroxypyruvate reductase B from Shigella dysenteriae serotype 1 (strain Sd197).